Reading from the N-terminus, the 279-residue chain is Zinc finger CCCH domain-containing protein 1 (279 aa).

Residues 20–45 (DVIVLSPGPPARRRPPPVKAVEPESG) are disordered. 2 C3H1-type zinc fingers span residues 56-84 (FYKT…HGDE) and 139-167 (RAIT…HVSA).

In Oryza sativa subsp. japonica (Rice), this protein is Zinc finger CCCH domain-containing protein 1.